A 334-amino-acid polypeptide reads, in one-letter code: Lipoyl synthase (334 aa).

The segment at 8–33 (LNNDTRPKVEAPARPRHPEKAHRPDT) is disordered. The segment covering 12-33 (TRPKVEAPARPRHPEKAHRPDT) has biased composition (basic and acidic residues). [4Fe-4S] cluster is bound by residues Cys68, Cys73, Cys79, Cys94, Cys98, Cys101, and Ser307. The region spanning 80–296 (WEKRHATFMI…ETTAYAKGFL (217 aa)) is the Radical SAM core domain.

This sequence belongs to the radical SAM superfamily. Lipoyl synthase family. [4Fe-4S] cluster is required as a cofactor.

It localises to the cytoplasm. It carries out the reaction [[Fe-S] cluster scaffold protein carrying a second [4Fe-4S](2+) cluster] + N(6)-octanoyl-L-lysyl-[protein] + 2 oxidized [2Fe-2S]-[ferredoxin] + 2 S-adenosyl-L-methionine + 4 H(+) = [[Fe-S] cluster scaffold protein] + N(6)-[(R)-dihydrolipoyl]-L-lysyl-[protein] + 4 Fe(3+) + 2 hydrogen sulfide + 2 5'-deoxyadenosine + 2 L-methionine + 2 reduced [2Fe-2S]-[ferredoxin]. The protein operates within protein modification; protein lipoylation via endogenous pathway; protein N(6)-(lipoyl)lysine from octanoyl-[acyl-carrier-protein]: step 2/2. Functionally, catalyzes the radical-mediated insertion of two sulfur atoms into the C-6 and C-8 positions of the octanoyl moiety bound to the lipoyl domains of lipoate-dependent enzymes, thereby converting the octanoylated domains into lipoylated derivatives. The polypeptide is Lipoyl synthase (Methylorubrum populi (strain ATCC BAA-705 / NCIMB 13946 / BJ001) (Methylobacterium populi)).